The chain runs to 159 residues: Ribosomal RNA large subunit methyltransferase H (159 aa).

G108 lines the S-adenosyl-L-methionine pocket.

This sequence belongs to the RNA methyltransferase RlmH family. In terms of assembly, homodimer.

Its subcellular location is the cytoplasm. The enzyme catalyses pseudouridine(1915) in 23S rRNA + S-adenosyl-L-methionine = N(3)-methylpseudouridine(1915) in 23S rRNA + S-adenosyl-L-homocysteine + H(+). Specifically methylates the pseudouridine at position 1915 (m3Psi1915) in 23S rRNA. The chain is Ribosomal RNA large subunit methyltransferase H from Lactobacillus johnsonii (strain CNCM I-12250 / La1 / NCC 533).